A 171-amino-acid polypeptide reads, in one-letter code: 3-hydroxydecanoyl-[acyl-carrier-protein] dehydratase (171 aa).

H70 is an active-site residue.

It belongs to the thioester dehydratase family. FabA subfamily. As to quaternary structure, homodimer.

The protein localises to the cytoplasm. The enzyme catalyses a (3R)-hydroxyacyl-[ACP] = a (2E)-enoyl-[ACP] + H2O. It carries out the reaction (3R)-hydroxydecanoyl-[ACP] = (2E)-decenoyl-[ACP] + H2O. The catalysed reaction is (2E)-decenoyl-[ACP] = (3Z)-decenoyl-[ACP]. The protein operates within lipid metabolism; fatty acid biosynthesis. Necessary for the introduction of cis unsaturation into fatty acids. Catalyzes the dehydration of (3R)-3-hydroxydecanoyl-ACP to E-(2)-decenoyl-ACP and then its isomerization to Z-(3)-decenoyl-ACP. Can catalyze the dehydratase reaction for beta-hydroxyacyl-ACPs with saturated chain lengths up to 16:0, being most active on intermediate chain length. The protein is 3-hydroxydecanoyl-[acyl-carrier-protein] dehydratase of Nitrosococcus oceani (strain ATCC 19707 / BCRC 17464 / JCM 30415 / NCIMB 11848 / C-107).